A 227-amino-acid polypeptide reads, in one-letter code: GFP-like non-fluorescent chromoprotein (227 aa).

The segment at residues 63–65 (AYG) is a cross-link (5-imidazolinone (Ala-Gly)). Residue Tyr-64 is modified to 2,3-didehydrotyrosine.

This sequence belongs to the GFP family. As to quaternary structure, homotetramer. Post-translationally, contains a chromophore consisting of modified amino acid residues. The chromophore is formed by autocatalytic backbone condensation between Xaa-N and Gly-(N+2), and oxidation of Tyr-(N+1) to didehydrotyrosine. Maturation of the chromophore requires nothing other than molecular oxygen. The precise stereochemistry of the tyrosine has not been determined.

Its function is as follows. Non-fluorescent pigment protein that is mauve in color. The wild-type form is non-fluorescent. The protein is GFP-like non-fluorescent chromoprotein of Condylactis gigantea (Giant Caribbean anemone).